The sequence spans 951 residues: Valine--tRNA ligase (951 aa).

A 'HIGH' region motif is present at residues 42–52 (PNVTGSLHMGH). Residues 554–558 (KMSKS) carry the 'KMSKS' region motif. K557 contacts ATP. Residues 880-944 (AGLINKEDEL…AEAKAKLIEQ (65 aa)) are a coiled coil.

This sequence belongs to the class-I aminoacyl-tRNA synthetase family. ValS type 1 subfamily. In terms of assembly, monomer.

It is found in the cytoplasm. It carries out the reaction tRNA(Val) + L-valine + ATP = L-valyl-tRNA(Val) + AMP + diphosphate. Its function is as follows. Catalyzes the attachment of valine to tRNA(Val). As ValRS can inadvertently accommodate and process structurally similar amino acids such as threonine, to avoid such errors, it has a 'posttransfer' editing activity that hydrolyzes mischarged Thr-tRNA(Val) in a tRNA-dependent manner. The sequence is that of Valine--tRNA ligase from Shigella flexneri.